Here is a 191-residue protein sequence, read N- to C-terminus: MLKVNKYVILIIAFVSQMMFSTTAQASFSATVSDAWSTLSNNVTQTWQAPEHYDLYVPVITWHARFAYDQEKIDNYNERPWGAGFGMSRWDEKGNWNGLYLMAFKDSFNKWEPIVGYGWEKTWRPLADDNFHLGLGYTLGVTARDNWNYIPLPVILPMASVGYGPATFQMTYIPGTYNNGNVYFAWLRFQF.

The N-terminal stretch at 1-26 is a signal peptide; it reads MLKVNKYVILIIAFVSQMMFSTTAQA. Residues His-63, Asp-106, and Ser-107 contribute to the active site.

The protein belongs to the lipid A palmitoyltransferase family. Homodimer.

The protein resides in the cell outer membrane. The enzyme catalyses a lipid A + a 1,2-diacyl-sn-glycero-3-phosphocholine = a hepta-acyl lipid A + a 2-acyl-sn-glycero-3-phosphocholine. It carries out the reaction a lipid IVA + a 1,2-diacyl-sn-glycero-3-phosphocholine = a lipid IVB + a 2-acyl-sn-glycero-3-phosphocholine. It catalyses the reaction a lipid IIA + a 1,2-diacyl-sn-glycero-3-phosphocholine = a lipid IIB + a 2-acyl-sn-glycero-3-phosphocholine. In terms of biological role, transfers a fatty acid residue from the sn-1 position of a phospholipid to the N-linked hydroxyfatty acid chain on the proximal unit of lipid A or its precursors. This chain is Lipid A acyltransferase PagP, found in Enterobacter lignolyticus (strain SCF1).